The following is a 289-amino-acid chain: NADPH-dependent 7-cyano-7-deazaguanine reductase (289 aa).

81-83 lines the substrate pocket; it reads IES. NADPH is bound at residue 83-84; the sequence is SK. Cysteine 196 functions as the Thioimide intermediate in the catalytic mechanism. Residue aspartate 203 is the Proton donor of the active site. 235–236 lines the substrate pocket; that stretch reads HE. NADPH is bound at residue 264-265; the sequence is RG.

Belongs to the GTP cyclohydrolase I family. QueF type 2 subfamily. As to quaternary structure, homodimer.

The protein resides in the cytoplasm. It carries out the reaction 7-aminomethyl-7-carbaguanine + 2 NADP(+) = 7-cyano-7-deazaguanine + 2 NADPH + 3 H(+). It functions in the pathway tRNA modification; tRNA-queuosine biosynthesis. In terms of biological role, catalyzes the NADPH-dependent reduction of 7-cyano-7-deazaguanine (preQ0) to 7-aminomethyl-7-deazaguanine (preQ1). In Albidiferax ferrireducens (strain ATCC BAA-621 / DSM 15236 / T118) (Rhodoferax ferrireducens), this protein is NADPH-dependent 7-cyano-7-deazaguanine reductase.